Consider the following 325-residue polypeptide: Tetraacyldisaccharide 4'-kinase (325 aa).

54–61 contacts ATP; sequence SVGGTGKT.

This sequence belongs to the LpxK family.

It catalyses the reaction a lipid A disaccharide + ATP = a lipid IVA + ADP + H(+). It participates in glycolipid biosynthesis; lipid IV(A) biosynthesis; lipid IV(A) from (3R)-3-hydroxytetradecanoyl-[acyl-carrier-protein] and UDP-N-acetyl-alpha-D-glucosamine: step 6/6. Functionally, transfers the gamma-phosphate of ATP to the 4'-position of a tetraacyldisaccharide 1-phosphate intermediate (termed DS-1-P) to form tetraacyldisaccharide 1,4'-bis-phosphate (lipid IVA). The sequence is that of Tetraacyldisaccharide 4'-kinase from Rickettsia felis (strain ATCC VR-1525 / URRWXCal2) (Rickettsia azadi).